The primary structure comprises 105 residues: Small ribosomal subunit protein uS10 (105 aa).

This sequence belongs to the universal ribosomal protein uS10 family. As to quaternary structure, part of the 30S ribosomal subunit.

Functionally, involved in the binding of tRNA to the ribosomes. This chain is Small ribosomal subunit protein uS10, found in Francisella philomiragia subsp. philomiragia (strain ATCC 25017 / CCUG 19701 / FSC 153 / O#319-036).